The sequence spans 184 residues: Photosystem I assembly protein Ycf4 (184 aa).

The next 2 helical transmembrane spans lie at 22–42 (FCWA…GTSS) and 57–77 (IIFF…LFIS).

It belongs to the Ycf4 family.

It localises to the plastid. It is found in the chloroplast thylakoid membrane. Functionally, seems to be required for the assembly of the photosystem I complex. The chain is Photosystem I assembly protein Ycf4 from Capsella bursa-pastoris (Shepherd's purse).